Reading from the N-terminus, the 122-residue chain is Large ribosomal subunit protein uL14 (122 aa).

Belongs to the universal ribosomal protein uL14 family. In terms of assembly, part of the 50S ribosomal subunit. Forms a cluster with proteins L3 and L19. In the 70S ribosome, L14 and L19 interact and together make contacts with the 16S rRNA in bridges B5 and B8.

Binds to 23S rRNA. Forms part of two intersubunit bridges in the 70S ribosome. In Sorangium cellulosum (strain So ce56) (Polyangium cellulosum (strain So ce56)), this protein is Large ribosomal subunit protein uL14.